A 366-amino-acid chain; its full sequence is Phenylalanine--tRNA ligase alpha subunit (366 aa).

Residue Glu-259 participates in Mg(2+) binding.

It belongs to the class-II aminoacyl-tRNA synthetase family. Phe-tRNA synthetase alpha subunit type 1 subfamily. Tetramer of two alpha and two beta subunits. It depends on Mg(2+) as a cofactor.

It is found in the cytoplasm. The enzyme catalyses tRNA(Phe) + L-phenylalanine + ATP = L-phenylalanyl-tRNA(Phe) + AMP + diphosphate + H(+). The polypeptide is Phenylalanine--tRNA ligase alpha subunit (Erythrobacter litoralis (strain HTCC2594)).